The following is a 605-amino-acid chain: Adenine deaminase (605 aa).

The protein belongs to the metallo-dependent hydrolases superfamily. Adenine deaminase family. Requires Mn(2+) as cofactor.

The enzyme catalyses adenine + H2O + H(+) = hypoxanthine + NH4(+). This Mesorhizobium japonicum (strain LMG 29417 / CECT 9101 / MAFF 303099) (Mesorhizobium loti (strain MAFF 303099)) protein is Adenine deaminase.